The following is a 244-amino-acid chain: Cell division protein ZapD (244 aa).

The protein belongs to the ZapD family. In terms of assembly, interacts with FtsZ.

The protein localises to the cytoplasm. Functionally, cell division factor that enhances FtsZ-ring assembly. Directly interacts with FtsZ and promotes bundling of FtsZ protofilaments, with a reduction in FtsZ GTPase activity. The protein is Cell division protein ZapD of Shewanella sp. (strain MR-4).